The chain runs to 220 residues: Deoxyribose-phosphate aldolase 2 (220 aa).

Asp-89 acts as the Proton donor/acceptor in catalysis. The Schiff-base intermediate with acetaldehyde role is filled by Lys-151. The active-site Proton donor/acceptor is the Lys-180.

This sequence belongs to the DeoC/FbaB aldolase family. DeoC type 1 subfamily.

Its subcellular location is the cytoplasm. It catalyses the reaction 2-deoxy-D-ribose 5-phosphate = D-glyceraldehyde 3-phosphate + acetaldehyde. It functions in the pathway carbohydrate degradation; 2-deoxy-D-ribose 1-phosphate degradation; D-glyceraldehyde 3-phosphate and acetaldehyde from 2-deoxy-alpha-D-ribose 1-phosphate: step 2/2. Functionally, catalyzes a reversible aldol reaction between acetaldehyde and D-glyceraldehyde 3-phosphate to generate 2-deoxy-D-ribose 5-phosphate. This is Deoxyribose-phosphate aldolase 2 from Staphylococcus aureus (strain COL).